The chain runs to 240 residues: Tubulin alpha chain (240 aa).

Residue N17 coordinates GTP. Residue E43 is part of the active site.

It belongs to the tubulin family. Dimer of alpha and beta chains. A typical microtubule is a hollow water-filled tube with an outer diameter of 25 nm and an inner diameter of 15 nM. Alpha-beta heterodimers associate head-to-tail to form protofilaments running lengthwise along the microtubule wall with the beta-tubulin subunit facing the microtubule plus end conferring a structural polarity. Microtubules usually have 13 protofilaments but different protofilament numbers can be found in some organisms and specialized cells. Requires Mg(2+) as cofactor. Undergoes a tyrosination/detyrosination cycle, the cyclic removal and re-addition of a C-terminal tyrosine residue by the enzymes tubulin tyrosine carboxypeptidase (TTCP) and tubulin tyrosine ligase (TTL), respectively.

Its subcellular location is the cytoplasm. It is found in the cytoskeleton. The catalysed reaction is GTP + H2O = GDP + phosphate + H(+). Functionally, tubulin is the major constituent of microtubules, a cylinder consisting of laterally associated linear protofilaments composed of alpha- and beta-tubulin heterodimers. Microtubules grow by the addition of GTP-tubulin dimers to the microtubule end, where a stabilizing cap forms. Below the cap, tubulin dimers are in GDP-bound state, owing to GTPase activity of alpha-tubulin. The polypeptide is Tubulin alpha chain (Octopus vulgaris (Common octopus)).